Here is a 259-residue protein sequence, read N- to C-terminus: Probable dihydroorotate dehydrogenase B (NAD(+)), electron transfer subunit (259 aa).

Positions 1-89 constitute an FAD-binding FR-type domain; it reads MLPLNVTITQ…RGPFGKGFTL (89 aa). Residues Cys-211, Cys-216, Cys-219, and Cys-229 each contribute to the [2Fe-2S] cluster site.

It belongs to the PyrK family. As to quaternary structure, heterotetramer of 2 PyrK and 2 PyrD type B subunits. It depends on [2Fe-2S] cluster as a cofactor. FAD serves as cofactor.

It functions in the pathway pyrimidine metabolism; UMP biosynthesis via de novo pathway; orotate from (S)-dihydroorotate (NAD(+) route): step 1/1. In terms of biological role, responsible for channeling the electrons from the oxidation of dihydroorotate from the FMN redox center in the PyrD type B subunit to the ultimate electron acceptor NAD(+). This chain is Probable dihydroorotate dehydrogenase B (NAD(+)), electron transfer subunit, found in Methanosarcina acetivorans (strain ATCC 35395 / DSM 2834 / JCM 12185 / C2A).